The sequence spans 131 residues: Small ribosomal subunit protein uS12 (131 aa).

Positions 1–32 are disordered; it reads MPTFSQLVRKGRTAPRYKTASPALQGSPQRRG. Asp-89 is subject to 3-methylthioaspartic acid. A disordered region spans residues 110 to 131; the sequence is RKQGRSKYGAKRAKGGAAAGKK. Residues 111-131 are compositionally biased toward basic residues; the sequence is KQGRSKYGAKRAKGGAAAGKK.

It belongs to the universal ribosomal protein uS12 family. In terms of assembly, part of the 30S ribosomal subunit. Contacts proteins S8 and S17. May interact with IF1 in the 30S initiation complex.

Its function is as follows. With S4 and S5 plays an important role in translational accuracy. Interacts with and stabilizes bases of the 16S rRNA that are involved in tRNA selection in the A site and with the mRNA backbone. Located at the interface of the 30S and 50S subunits, it traverses the body of the 30S subunit contacting proteins on the other side and probably holding the rRNA structure together. The combined cluster of proteins S8, S12 and S17 appears to hold together the shoulder and platform of the 30S subunit. The sequence is that of Small ribosomal subunit protein uS12 from Acidobacterium capsulatum (strain ATCC 51196 / DSM 11244 / BCRC 80197 / JCM 7670 / NBRC 15755 / NCIMB 13165 / 161).